We begin with the raw amino-acid sequence, 254 residues long: Urease accessory protein UreD (254 aa).

It belongs to the UreD family. In terms of assembly, ureD, UreF and UreG form a complex that acts as a GTP-hydrolysis-dependent molecular chaperone, activating the urease apoprotein by helping to assemble the nickel containing metallocenter of UreC. The UreE protein probably delivers the nickel.

The protein resides in the cytoplasm. Required for maturation of urease via the functional incorporation of the urease nickel metallocenter. The protein is Urease accessory protein UreD of Streptomyces coelicolor (strain ATCC BAA-471 / A3(2) / M145).